We begin with the raw amino-acid sequence, 152 residues long: Ubiquitin-conjugating enzyme E2 A (152 aa).

A UBC core domain is found at 4–150; that stretch reads PARRRLMRDF…VSAIVEQSWR (147 aa). Cys-88 (glycyl thioester intermediate) is an active-site residue. Ser-120 bears the Phosphoserine; by CDK9 mark.

Belongs to the ubiquitin-conjugating enzyme family. Interacts with RAD18 and WAC. Interacts with RFPL4A and CCNB1. Post-translationally, phosphorylation at Ser-120 by CDK9 increases activity towards histone H2B.

It is found in the late endosome. Its subcellular location is the lysosome. The enzyme catalyses S-ubiquitinyl-[E1 ubiquitin-activating enzyme]-L-cysteine + [E2 ubiquitin-conjugating enzyme]-L-cysteine = [E1 ubiquitin-activating enzyme]-L-cysteine + S-ubiquitinyl-[E2 ubiquitin-conjugating enzyme]-L-cysteine.. Its pathway is protein modification; protein ubiquitination. Functionally, E2 ubiquitin-conjugating enzyme that accepts ubiquitin from the ubiquitin-activating enzyme E1 and transfers it to a E3 ubiquitin-protein ligase. In vitro catalyzes 'Lys-11', as well as 'Lys-48'-linked polyubiquitination. Together with the E3 enzyme BRE1 (RNF20 and/or RNF40), plays a role in transcription regulation by catalyzing the monoubiquitination of histone H2B at 'Lys-120' to form H2BK120ub1. H2BK120ub1 gives a specific tag for epigenetic transcriptional activation, elongation by RNA polymerase II, telomeric silencing, and is also a prerequisite for H3K4me and H3K79me formation. Involved in mitophagy by acting as a E2 ubiquitin-conjugating enzyme for PRKN. In association with the E3 enzyme UBR4, is involved in N-end rule-dependent protein degradation. In association with the E3 ubiquitin-protein ligase complex SIFI, inhibits the mitochondrial stress response by acting as a E2 ubiquitin-conjugating enzyme for UBR4 and KCMF1. The chain is Ubiquitin-conjugating enzyme E2 A from Homo sapiens (Human).